The primary structure comprises 345 residues: Dihydroorotate dehydrogenase (quinone) (345 aa).

Residues 65–69 and Thr-89 contribute to the FMN site; that span reads AGLDK. Lys-69 contacts substrate. 114–118 lines the substrate pocket; that stretch reads NRMGF. FMN-binding residues include Asn-142 and Asn-175. Asn-175 serves as a coordination point for substrate. Ser-178 acts as the Nucleophile in catalysis. Asn-180 contributes to the substrate binding site. Lys-220 and Thr-248 together coordinate FMN. 249 to 250 is a binding site for substrate; that stretch reads NT. Residues Gly-271, Gly-300, and 321 to 322 contribute to the FMN site; that span reads YT.

Belongs to the dihydroorotate dehydrogenase family. Type 2 subfamily. In terms of assembly, monomer. The cofactor is FMN.

It is found in the cell membrane. It carries out the reaction (S)-dihydroorotate + a quinone = orotate + a quinol. It functions in the pathway pyrimidine metabolism; UMP biosynthesis via de novo pathway; orotate from (S)-dihydroorotate (quinone route): step 1/1. Catalyzes the conversion of dihydroorotate to orotate with quinone as electron acceptor. In Burkholderia mallei (strain NCTC 10247), this protein is Dihydroorotate dehydrogenase (quinone).